The following is a 607-amino-acid chain: Inactive metallocarboxypeptidase ECM14 (607 aa).

An N-terminal signal peptide occupies residues M1–A21. The propeptide occupies I22–P174. Residues N202 to L522 enclose the Peptidase M14 domain. Residues H264 and E267 each contribute to the Zn(2+) site. Substrate contacts are provided by residues H264–E267, R322, and D339–R340. C333 and C356 form a disulfide bridge. N349 is a glycosylation site (N-linked (GlcNAc...) asparagine). Residue H396 coordinates Zn(2+). Residue S397–Y398 coordinates substrate. Residues Q539–R607 are disordered. Positions N550 to D571 are enriched in acidic residues. Residues G573–N590 show a composition bias toward basic and acidic residues.

This sequence belongs to the peptidase M14 family. The cofactor is Zn(2+).

It localises to the vacuole. It is found in the secreted. Inactive carboxypeptidase that may play a role in cell wall organization and biogenesis. The sequence is that of Inactive metallocarboxypeptidase ECM14 (ECM14) from Ajellomyces capsulatus (strain NAm1 / WU24) (Darling's disease fungus).